Consider the following 387-residue polypeptide: Alkanesulfonate monooxygenase (387 aa).

The protein belongs to the SsuD family.

It catalyses the reaction an alkanesulfonate + FMNH2 + O2 = an aldehyde + FMN + sulfite + H2O + 2 H(+). In terms of biological role, catalyzes the desulfonation of aliphatic sulfonates. The polypeptide is Alkanesulfonate monooxygenase (Cupriavidus pinatubonensis (strain JMP 134 / LMG 1197) (Cupriavidus necator (strain JMP 134))).